The following is an 814-amino-acid chain: Cellulase/esterase CelE (814 aa).

The N-terminal stretch at 1–34 (MKKIVSLVCVLVMLVSILGSFSVVAASPVKGFQV) is a signal peptide. The cellulase stretch occupies residues 35–354 (SGTKLLDASG…AVFWWDNGYY (320 aa)). Catalysis depends on glutamate 193, which acts as the Proton donor; for cellulase activity. The Nucleophile; for cellulase activity role is filled by glutamate 316. The 71-residue stretch at 409 to 479 (ANILYGDVNG…LLRSIDKFPA (71 aa)) folds into the Dockerin domain. 12 residues coordinate Ca(2+): aspartate 415, asparagine 417, aspartate 419, glycine 420, lysine 421, aspartate 426, aspartate 451, valine 452, asparagine 453, aspartate 455, lysine 457, and aspartate 462. The interval 490–814 (PGILYNGRFD…TAEIKNKLGW (325 aa)) is esterase. Catalysis depends on serine 612, which acts as the Nucleophile; for esterase activity.

The protein in the N-terminal section; belongs to the glycosyl hydrolase 5 (cellulase A) family. This sequence in the C-terminal section; belongs to the carbohydrate esterase 2 (CE2) family.

Its subcellular location is the secreted. It catalyses the reaction Endohydrolysis of (1-&gt;4)-beta-D-glucosidic linkages in cellulose, lichenin and cereal beta-D-glucans.. The catalysed reaction is Deacetylation of xylans and xylo-oligosaccharides.. It participates in glycan metabolism; cellulose degradation. It functions in the pathway glycan degradation; xylan degradation. Its activity is regulated as follows. Esterase activity of the CE2 module is inhibited when this domain binds to cellohexaose or beta-glucan. Its function is as follows. Multifunctional enzyme involved in the degradation of plant cell wall polysaccharides. Displays endoglucanase activity against carboxymethyl cellulose (CMC) and barley beta-glucan. Also catalyzes the deacetylation of acetylated birchwood xylan and glucomannan, with a preference for the latter, and of the synthetic substrate 4-nitrophenyl acetate (4-NPAc). The sequence is that of Cellulase/esterase CelE from Acetivibrio thermocellus (strain ATCC 27405 / DSM 1237 / JCM 9322 / NBRC 103400 / NCIMB 10682 / NRRL B-4536 / VPI 7372) (Clostridium thermocellum).